The chain runs to 217 residues: Pyridoxine/pyridoxamine 5'-phosphate oxidase (217 aa).

Substrate contacts are provided by residues 14–17 (RKSY) and lysine 72. Residues 67-72 (RVVLIK), 82-83 (YT), arginine 88, and lysine 89 each bind FMN. 3 residues coordinate substrate: tyrosine 129, arginine 133, and serine 137. Residues 146-147 (QS) and tryptophan 190 contribute to the FMN site. 196–198 (RLH) serves as a coordination point for substrate. Arginine 200 is an FMN binding site.

The protein belongs to the pyridoxamine 5'-phosphate oxidase family. As to quaternary structure, homodimer. FMN is required as a cofactor.

The enzyme catalyses pyridoxamine 5'-phosphate + O2 + H2O = pyridoxal 5'-phosphate + H2O2 + NH4(+). It catalyses the reaction pyridoxine 5'-phosphate + O2 = pyridoxal 5'-phosphate + H2O2. Its pathway is cofactor metabolism; pyridoxal 5'-phosphate salvage; pyridoxal 5'-phosphate from pyridoxamine 5'-phosphate: step 1/1. It participates in cofactor metabolism; pyridoxal 5'-phosphate salvage; pyridoxal 5'-phosphate from pyridoxine 5'-phosphate: step 1/1. Functionally, catalyzes the oxidation of either pyridoxine 5'-phosphate (PNP) or pyridoxamine 5'-phosphate (PMP) into pyridoxal 5'-phosphate (PLP). The chain is Pyridoxine/pyridoxamine 5'-phosphate oxidase from Acidovorax sp. (strain JS42).